The primary structure comprises 309 residues: 4-hydroxy-3-methylbut-2-enyl diphosphate reductase (309 aa).

Residue Cys-12 participates in [4Fe-4S] cluster binding. (2E)-4-hydroxy-3-methylbut-2-enyl diphosphate is bound by residues His-43 and His-77. Positions 43 and 77 each coordinate dimethylallyl diphosphate. Isopentenyl diphosphate-binding residues include His-43 and His-77. Residue Cys-99 participates in [4Fe-4S] cluster binding. A (2E)-4-hydroxy-3-methylbut-2-enyl diphosphate-binding site is contributed by His-127. Position 127 (His-127) interacts with dimethylallyl diphosphate. Isopentenyl diphosphate is bound at residue His-127. The Proton donor role is filled by Glu-129. A (2E)-4-hydroxy-3-methylbut-2-enyl diphosphate-binding site is contributed by Thr-167. Cys-197 contributes to the [4Fe-4S] cluster binding site. Positions 225, 226, 227, and 269 each coordinate (2E)-4-hydroxy-3-methylbut-2-enyl diphosphate. The dimethylallyl diphosphate site is built by Ser-225, Ser-226, Asn-227, and Ser-269. 4 residues coordinate isopentenyl diphosphate: Ser-225, Ser-226, Asn-227, and Ser-269.

The protein belongs to the IspH family. [4Fe-4S] cluster is required as a cofactor.

It carries out the reaction isopentenyl diphosphate + 2 oxidized [2Fe-2S]-[ferredoxin] + H2O = (2E)-4-hydroxy-3-methylbut-2-enyl diphosphate + 2 reduced [2Fe-2S]-[ferredoxin] + 2 H(+). The enzyme catalyses dimethylallyl diphosphate + 2 oxidized [2Fe-2S]-[ferredoxin] + H2O = (2E)-4-hydroxy-3-methylbut-2-enyl diphosphate + 2 reduced [2Fe-2S]-[ferredoxin] + 2 H(+). It participates in isoprenoid biosynthesis; dimethylallyl diphosphate biosynthesis; dimethylallyl diphosphate from (2E)-4-hydroxy-3-methylbutenyl diphosphate: step 1/1. Its pathway is isoprenoid biosynthesis; isopentenyl diphosphate biosynthesis via DXP pathway; isopentenyl diphosphate from 1-deoxy-D-xylulose 5-phosphate: step 6/6. Its function is as follows. Catalyzes the conversion of 1-hydroxy-2-methyl-2-(E)-butenyl 4-diphosphate (HMBPP) into a mixture of isopentenyl diphosphate (IPP) and dimethylallyl diphosphate (DMAPP). Acts in the terminal step of the DOXP/MEP pathway for isoprenoid precursor biosynthesis. The sequence is that of 4-hydroxy-3-methylbut-2-enyl diphosphate reductase from Wolbachia sp. subsp. Brugia malayi (strain TRS).